The sequence spans 205 residues: MSYNLENQVIALAGVFQSAALVDQLAKQGTVAPTSYECSLKSLLKVDATSTLDVYGDIYGLQLGLKELIAVLERKQDRKKVDVVRYALTLLYLEGKVNKRGDMLDVMSQRIAQINTQTLHFEPTHTNIISAFASLYSDTISTFPQRIQVTGDPRFLRVDENADKIRALLLAGIRAAVLWRQVGGRRWKLFFMRKKILQIANGMLR.

The protein belongs to the HflD family.

The protein localises to the cytoplasm. Its subcellular location is the cell inner membrane. The chain is High frequency lysogenization protein HflD homolog from Hahella chejuensis (strain KCTC 2396).